The following is a 1966-amino-acid chain: Histone-lysine N-methyltransferase SETD1B (1966 aa).

Residues 1-12 (MENSHPPHHHHQ) are compositionally biased toward basic residues. Residues 1-26 (MENSHPPHHHHQQPPPQPGPSGERRN) are disordered. Positions 68–98 (VEDPRVVGIWTKNKELELSVPKFKIDEFYVG) are interaction with WDR82. The RRM domain occupies 93–181 (DEFYVGPVPP…NIIHVELDTK (89 aa)). Disordered regions lie at residues 235-302 (GCGS…LFSQ), 357-660 (VGGT…PKPM), 675-719 (LAPT…PPPA), 963-1462 (KVKR…SGPL), 1501-1541 (PPLL…RPPA), 1555-1606 (QPQT…KLPF), and 1636-1668 (AKSR…PQPL). 3 stretches are compositionally biased toward polar residues: residues 243 to 259 (VTPN…TAYS), 265 to 274 (TPNSYGQGTP), and 282 to 300 (PFSQ…SYLF). 2 stretches are compositionally biased toward pro residues: residues 432 to 441 (PAPPPLPPAE) and 449 to 458 (GTPPGPPPPD). Positions 493 to 521 (EKPHDSLDSRIEMLLKEQRTKLLFLREPD) are enriched in basic and acidic residues. Positions 531-543 (SPISSSSSQLSPL) are enriched in low complexity. The span at 592–603 (PRPPPEPGPPDP) shows a compositional bias: pro residues. A compositionally biased stretch (acidic residues) spans 637 to 646 (EDMEISDDEM). The segment covering 679-719 (LPLPPPPGFPPLPPPPPPPPPQPGFPMPPPLPPPPPPPPPA) has biased composition (pro residues). 2 positions are modified to phosphoserine: serine 986 and serine 994. Positions 995 to 1015 (ERERDRDMADTPCELAKRDPK) are enriched in basic and acidic residues. A Phosphoserine modification is found at serine 1031. Residues 1041–1064 (LSASSSSSASSSSGSSTTSPSSSA) show a composition bias toward low complexity. Acidic residues-rich tracts occupy residues 1067–1087 (KEEE…EEEE) and 1104–1142 (KDDD…EEET). Positions 1148-1174 (SKAEATSSSESSESSEFESSSESSPSS) are enriched in low complexity. The stretch at 1173-1204 (SSSEDEEEVVAREEEEEEEEEEMVAEESMASA) forms a coiled coil. 2 stretches are compositionally biased toward acidic residues: residues 1175-1197 (SEDE…EMVA) and 1229-1238 (GMEEEVDIET). A phosphoserine mark is found at serine 1265, serine 1283, and serine 1335. The segment covering 1312–1340 (EPPMMLPLPLQPPLPPPRPPRPPSPPPEP) has biased composition (pro residues). The span at 1383–1425 (PGGEPPLSGGSSGLSLSSPQVPGSPFSYPAPSPSLSSGGLPRT) shows a compositional bias: low complexity. The span at 1501-1514 (PPLLPAPLASCPPP) shows a compositional bias: pro residues. Over residues 1515–1524 (MKRKPGRPRR) the composition is skewed to basic residues. Residues 1580–1600 (PAPPPPLPPQPPPPPPPPPVE) are compositionally biased toward pro residues. Phosphoserine is present on residues serine 1659 and serine 1663. The WDR5 interaction motif (WIN) signature appears at 1745–1750 (GCARSE). Positions 1767 to 1800 (SRASTDEPPADTQGMSIPAQPHASTRAGSERRSE) are disordered. A RxxxRR motif motif is present at residues 1798–1803 (RSEQRR). Residues 1827–1944 (KKLKFCKSHI…VNEEITYDYK (118 aa)) enclose the SET domain. Residue tyrosine 1943 coordinates S-adenosyl-L-methionine. Positions 1950–1966 (VKIPCLCGSENCRGTLN) constitute a Post-SET domain.

It belongs to the class V-like SAM-binding methyltransferase superfamily. As to quaternary structure, component of the SET1B/COMPASS complex composed of the catalytic subunit SETD1B, WDR5, WDR82, RBBP5, ASH2L/ASH2, CXXC1/CFP1, HCFC1, DPY30 homotrimer and BOD1. Forms a core complex with the evolutionary conserved subcomplex WRAD composed of WDR5, RBBP5, ASH2L/ASH2 and DPY30 subunits; WRAD differentially stimulates the methyltransferase activity. Interacts with HCFC1 and ASH2L/ASH2. Interacts (via N-terminal region) with WDR82. Interacts (via the RRM domain) with hyperphosphorylated C-terminal domain (CTD) of RNA polymerase II large subunit (POLR2A) only in the presence of WDR82. Binds specifically to CTD heptad repeats phosphorylated on 'Ser-5' of each heptad. Interacts with RBM15. Interacts (via WIN motif) with WDR5.

Its subcellular location is the nucleus. It localises to the nucleus speckle. The protein localises to the chromosome. It is found in the cytoplasm. It carries out the reaction L-lysyl(4)-[histone H3] + S-adenosyl-L-methionine = N(6)-methyl-L-lysyl(4)-[histone H3] + S-adenosyl-L-homocysteine + H(+). The enzyme catalyses N(6)-methyl-L-lysyl(4)-[histone H3] + S-adenosyl-L-methionine = N(6),N(6)-dimethyl-L-lysyl(4)-[histone H3] + S-adenosyl-L-homocysteine + H(+). It catalyses the reaction N(6),N(6)-dimethyl-L-lysyl(4)-[histone H3] + S-adenosyl-L-methionine = N(6),N(6),N(6)-trimethyl-L-lysyl(4)-[histone H3] + S-adenosyl-L-homocysteine + H(+). Its function is as follows. Histone methyltransferase that catalyzes methyl group transfer from S-adenosyl-L-methionine to the epsilon-amino group of 'Lys-4' of histone H3 (H3K4) via a non-processive mechanism. Part of chromatin remodeling machinery, forms H3K4me1, H3K4me2 and H3K4me3 methylation marks at active chromatin sites where transcription and DNA repair take place. Plays an essential role in regulating the transcriptional programming of multipotent hematopoietic progenitor cells and lymphoid lineage specification during hematopoiesis. This chain is Histone-lysine N-methyltransferase SETD1B (SETD1B), found in Homo sapiens (Human).